The sequence spans 356 residues: 5-formaminoimidazole-4-carboxamide-1-(beta)-D-ribofuranosyl 5'-monophosphate synthetase (356 aa).

5-amino-1-(5-phospho-beta-D-ribosyl)imidazole-4-carboxamide is bound by residues His-27 and Ser-94. The ATP-grasp domain occupies 101–333; sequence TENFAELTVP…YADLIQEDLS (233 aa). ATP-binding positions include 145–196 and Glu-226; that span reads PRDI…TRYY. Asn-255 serves as a coordination point for 5-amino-1-(5-phospho-beta-D-ribosyl)imidazole-4-carboxamide. Residues Glu-293 and Glu-306 each coordinate Mg(2+).

Belongs to the phosphohexose mutase family. The cofactor is Mg(2+). Mn(2+) is required as a cofactor.

The catalysed reaction is 5-amino-1-(5-phospho-beta-D-ribosyl)imidazole-4-carboxamide + formate + ATP = 5-formamido-1-(5-phospho-D-ribosyl)imidazole-4-carboxamide + ADP + phosphate. It functions in the pathway purine metabolism; IMP biosynthesis via de novo pathway; 5-formamido-1-(5-phospho-D-ribosyl)imidazole-4-carboxamide from 5-amino-1-(5-phospho-D-ribosyl)imidazole-4-carboxamide (formate route): step 1/1. In terms of biological role, catalyzes the ATP- and formate-dependent formylation of 5-aminoimidazole-4-carboxamide-1-beta-d-ribofuranosyl 5'-monophosphate (AICAR) to 5-formaminoimidazole-4-carboxamide-1-beta-d-ribofuranosyl 5'-monophosphate (FAICAR) in the absence of folates. This is 5-formaminoimidazole-4-carboxamide-1-(beta)-D-ribofuranosyl 5'-monophosphate synthetase from Methanosarcina acetivorans (strain ATCC 35395 / DSM 2834 / JCM 12185 / C2A).